Reading from the N-terminus, the 515-residue chain is MEFRLLILALFSVLMSTSNGAEILALFPIHGISNYNVAEALLKTLANRGHNVTVVTSFPQKKPVPNLYEIDVSGAKGLATNSIHFERLQTIIQDVKSNFKNMVRLSRTYCEIMFSDPRVLNIRDKKFDLVINAVFGSDCDAGFAWKSQAPLISILNARHTPWALHRMGNPSNPAYMPVIHSRFPVKMNFFQRMINTGWHLYFLYMYFYYGNGEDANKMARKFFGNDMPDINEMVFNTSLLFVNTHFSVDMPYPLVPNCIEIGGIHVKEPQPLPLEIQKFMDEAEHGVIFFTLGSMVRTSTFPNQTIQAFKEAFAELPQRVLWKFENENEDMPSNVLIRKWFPQNDIFGHKNIKAFISHGGNSGALEAVHFGVPIIGIPLFYDQYRNILSFVKEGVAVLLDVNDLTKDNILSSVRTVVNDKSYSERMKALSQLFRDRPMSPLDTAVYWTEYVIRHRGAHHLKTAGAFLHWYQYLLLDVITFLLVTFCAFCFIVKYICKALIHHYWSSSKSEKLKKN.

Positions 1-20 are cleaved as a signal peptide; it reads MEFRLLILALFSVLMSTSNG. Residues 21–471 are Lumenal-facing; it reads AEILALFPIH…TAGAFLHWYQ (451 aa). Asparagine 51, asparagine 236, and asparagine 303 each carry an N-linked (GlcNAc...) asparagine glycan. The chain crosses the membrane as a helical span at residues 472–492; the sequence is YLLLDVITFLLVTFCAFCFIV. Topologically, residues 493-515 are cytoplasmic; it reads KYICKALIHHYWSSSKSEKLKKN.

Belongs to the UDP-glycosyltransferase family. Post-translationally, glycosylated.

It localises to the endoplasmic reticulum membrane. It carries out the reaction kermesate + UDP-alpha-D-glucose = carminate + UDP + 2 H(+). It catalyses the reaction flavokermesate + UDP-alpha-D-glucose = flavokermesate 7-C-beta-D-glucoside + UDP + 2 H(+). Membrane-bound UDP-glucosyltransferase (UGT) which catalyzes the C-glucosylation of kermesate and flavokermesate to produce carminate and flavokermesate 7-C-beta-D-glucoside (dcll) respectively. Carminate is used as a deterrent against insect predators. The sequence is that of UDP-glucosyltransferase 2 from Dactylopius coccus (Cochineal).